The following is a 164-amino-acid chain: Large ribosomal subunit protein uL10 (164 aa).

Belongs to the universal ribosomal protein uL10 family. As to quaternary structure, part of the ribosomal stalk of the 50S ribosomal subunit. The N-terminus interacts with L11 and the large rRNA to form the base of the stalk. The C-terminus forms an elongated spine to which L12 dimers bind in a sequential fashion forming a multimeric L10(L12)X complex.

Forms part of the ribosomal stalk, playing a central role in the interaction of the ribosome with GTP-bound translation factors. The protein is Large ribosomal subunit protein uL10 of Helicobacter pylori (strain G27).